The sequence spans 230 residues: Uracil-DNA glycosylase (230 aa).

Residue Asp-70 is the Proton acceptor of the active site.

The protein belongs to the uracil-DNA glycosylase (UDG) superfamily. UNG family.

It localises to the cytoplasm. It carries out the reaction Hydrolyzes single-stranded DNA or mismatched double-stranded DNA and polynucleotides, releasing free uracil.. Excises uracil residues from the DNA which can arise as a result of misincorporation of dUMP residues by DNA polymerase or due to deamination of cytosine. In Campylobacter concisus (strain 13826), this protein is Uracil-DNA glycosylase.